A 521-amino-acid polypeptide reads, in one-letter code: Ribonuclease Y (521 aa).

Residues 1–21 traverse the membrane as a helical segment; it reads MFFIEHPFVYLGLDLIVGCLI. The KH domain occupies 211–271; it reads TVSMVPLPSD…VRREVARLAL (61 aa). The region spanning 337-430 is the HD domain; sequence VLQHSLEVAF…VQAADALSGA (94 aa).

Belongs to the RNase Y family.

The protein localises to the cell membrane. Its function is as follows. Endoribonuclease that initiates mRNA decay. The chain is Ribonuclease Y from Desulfotalea psychrophila (strain LSv54 / DSM 12343).